Consider the following 408-residue polypeptide: UPF0496 protein At5g66670 (408 aa).

Transmembrane regions (helical) follow at residues 239 to 259 (VVFA…AAMM) and 262 to 282 (PVLS…GMWC).

Belongs to the UPF0496 family.

The protein resides in the membrane. The protein is UPF0496 protein At5g66670 of Arabidopsis thaliana (Mouse-ear cress).